The primary structure comprises 217 residues: MKFFVDTADTAEIADLAATGLLDGVTTNPTLIAKAGKDFIEVTKEICGLVDGPVSAEVVALDHEGMMREAEVLRKIADNVCIKVPLTVDGLKTCKALTGEGTMVNVTLCFSANQALLAAKAGATFISPFVGRHDDNGFDGMDLIRDIRLIYDNYAFETQILVASIRHGVHVLESARIGADVITAPPAVIKGLFKHVLTDKGIEGFLADWAKTGQKIV.

Lys-83 functions as the Schiff-base intermediate with substrate in the catalytic mechanism.

It belongs to the transaldolase family. Type 3B subfamily.

It is found in the cytoplasm. The catalysed reaction is D-sedoheptulose 7-phosphate + D-glyceraldehyde 3-phosphate = D-erythrose 4-phosphate + beta-D-fructose 6-phosphate. It functions in the pathway carbohydrate degradation; pentose phosphate pathway; D-glyceraldehyde 3-phosphate and beta-D-fructose 6-phosphate from D-ribose 5-phosphate and D-xylulose 5-phosphate (non-oxidative stage): step 2/3. Its function is as follows. Transaldolase is important for the balance of metabolites in the pentose-phosphate pathway. The polypeptide is Probable transaldolase (Novosphingobium aromaticivorans (strain ATCC 700278 / DSM 12444 / CCUG 56034 / CIP 105152 / NBRC 16084 / F199)).